Here is a 130-residue protein sequence, read N- to C-terminus: Fumarate reductase subunit C (130 aa).

The next 3 helical transmembrane spans lie at 37–57 (VWFSILLIYGVFALKSGPAGW), 60–80 (FVGFLQNPLVLLINIITLLAA), and 109–129 (VIKALWVVTIVATAIILAVAL).

The protein belongs to the FrdC family. In terms of assembly, part of an enzyme complex containing four subunits: a flavoprotein (FrdA), an iron-sulfur protein (FrdB), and two hydrophobic anchor proteins (FrdC and FrdD).

Its subcellular location is the cell inner membrane. Two distinct, membrane-bound, FAD-containing enzymes are responsible for the catalysis of fumarate and succinate interconversion; fumarate reductase is used in anaerobic growth, and succinate dehydrogenase is used in aerobic growth. Anchors the catalytic components of the fumarate reductase complex to the cell inner membrane, binds quinones. The protein is Fumarate reductase subunit C of Yersinia enterocolitica serotype O:8 / biotype 1B (strain NCTC 13174 / 8081).